The sequence spans 489 residues: Protein nucleotidyltransferase YdiU (489 aa).

ATP is bound by residues glycine 88, glycine 90, arginine 91, lysine 111, aspartate 123, glycine 124, arginine 174, and arginine 181. The Proton acceptor role is filled by aspartate 250. Asparagine 251 and aspartate 260 together coordinate Mg(2+). Aspartate 260 contributes to the ATP binding site.

The protein belongs to the SELO family. Mg(2+) is required as a cofactor. The cofactor is Mn(2+).

It carries out the reaction L-seryl-[protein] + ATP = 3-O-(5'-adenylyl)-L-seryl-[protein] + diphosphate. It catalyses the reaction L-threonyl-[protein] + ATP = 3-O-(5'-adenylyl)-L-threonyl-[protein] + diphosphate. The catalysed reaction is L-tyrosyl-[protein] + ATP = O-(5'-adenylyl)-L-tyrosyl-[protein] + diphosphate. The enzyme catalyses L-histidyl-[protein] + UTP = N(tele)-(5'-uridylyl)-L-histidyl-[protein] + diphosphate. It carries out the reaction L-seryl-[protein] + UTP = O-(5'-uridylyl)-L-seryl-[protein] + diphosphate. It catalyses the reaction L-tyrosyl-[protein] + UTP = O-(5'-uridylyl)-L-tyrosyl-[protein] + diphosphate. Nucleotidyltransferase involved in the post-translational modification of proteins. It can catalyze the addition of adenosine monophosphate (AMP) or uridine monophosphate (UMP) to a protein, resulting in modifications known as AMPylation and UMPylation. In Vibrio parahaemolyticus serotype O3:K6 (strain RIMD 2210633), this protein is Protein nucleotidyltransferase YdiU.